The sequence spans 307 residues: Acetyl-coenzyme A carboxylase carboxyl transferase subunit beta (307 aa).

One can recognise a CoA carboxyltransferase N-terminal domain in the interval 25-294 (LWIKDPESGE…TEENGSRRLP (270 aa)).

It belongs to the AccD/PCCB family. Acetyl-CoA carboxylase is a heterohexamer composed of biotin carboxyl carrier protein (AccB), biotin carboxylase (AccC) and two subunits each of ACCase subunit alpha (AccA) and ACCase subunit beta (AccD).

It localises to the cytoplasm. The enzyme catalyses N(6)-carboxybiotinyl-L-lysyl-[protein] + acetyl-CoA = N(6)-biotinyl-L-lysyl-[protein] + malonyl-CoA. It participates in lipid metabolism; malonyl-CoA biosynthesis; malonyl-CoA from acetyl-CoA: step 1/1. Its function is as follows. Component of the acetyl coenzyme A carboxylase (ACC) complex. Biotin carboxylase (BC) catalyzes the carboxylation of biotin on its carrier protein (BCCP) and then the CO(2) group is transferred by the transcarboxylase to acetyl-CoA to form malonyl-CoA. The protein is Acetyl-coenzyme A carboxylase carboxyl transferase subunit beta of Chelativorans sp. (strain BNC1).